A 135-amino-acid polypeptide reads, in one-letter code: Ribosome-binding factor A (135 aa).

This sequence belongs to the RbfA family. Monomer. Binds 30S ribosomal subunits, but not 50S ribosomal subunits or 70S ribosomes.

The protein resides in the cytoplasm. Functionally, one of several proteins that assist in the late maturation steps of the functional core of the 30S ribosomal subunit. Associates with free 30S ribosomal subunits (but not with 30S subunits that are part of 70S ribosomes or polysomes). Required for efficient processing of 16S rRNA. May interact with the 5'-terminal helix region of 16S rRNA. The polypeptide is Ribosome-binding factor A (Hahella chejuensis (strain KCTC 2396)).